Here is a 327-residue protein sequence, read N- to C-terminus: DNA-directed RNA polymerase subunit alpha (327 aa).

The alpha N-terminal domain (alpha-NTD) stretch occupies residues 1 to 233; it reads MVREKVKVST…NLFIPFLHVE (233 aa). Positions 264–327 are alpha C-terminal domain (alpha-CTD); sequence TKELAFQYIF…KKILDILEKK (64 aa).

This sequence belongs to the RNA polymerase alpha chain family. In terms of assembly, in plastids the minimal PEP RNA polymerase catalytic core is composed of four subunits: alpha, beta, beta', and beta''. When a (nuclear-encoded) sigma factor is associated with the core the holoenzyme is formed, which can initiate transcription.

It localises to the plastid. It is found in the chloroplast. The catalysed reaction is RNA(n) + a ribonucleoside 5'-triphosphate = RNA(n+1) + diphosphate. Its function is as follows. DNA-dependent RNA polymerase catalyzes the transcription of DNA into RNA using the four ribonucleoside triphosphates as substrates. The polypeptide is DNA-directed RNA polymerase subunit alpha (Capsella bursa-pastoris (Shepherd's purse)).